Here is a 127-residue protein sequence, read N- to C-terminus: NHP2-like protein 1 homolog (127 aa).

It belongs to the eukaryotic ribosomal protein eL8 family.

The protein resides in the nucleus. It is found in the nucleolus. Its function is as follows. Binds to the 5'-stem-loop of U4 snRNA and may play a role in the late stage of spliceosome assembly. The protein undergoes a conformational change upon RNA-binding. This chain is NHP2-like protein 1 homolog (hoip), found in Drosophila melanogaster (Fruit fly).